We begin with the raw amino-acid sequence, 371 residues long: Prephenate dehydrogenase (371 aa).

The 290-residue stretch at 6-295 folds into the Prephenate/arogenate dehydrogenase domain; that stretch reads DTILLAGLGL…GLPLRQKGAI (290 aa). 7-37 is an NAD(+) binding site; the sequence is TILLAGLGLIGGSIALAIKKNHPGKRIIGID. An ACT domain is found at 300 to 371; sequence DLYVDVPDHP…RAEYETFYAD (72 aa).

Belongs to the prephenate/arogenate dehydrogenase family.

The catalysed reaction is prephenate + NAD(+) = 3-(4-hydroxyphenyl)pyruvate + CO2 + NADH. It participates in amino-acid biosynthesis; L-tyrosine biosynthesis; (4-hydroxyphenyl)pyruvate from prephenate (NAD(+) route): step 1/1. The protein is Prephenate dehydrogenase (tyrA) of Bacillus subtilis (strain 168).